Consider the following 437-residue polypeptide: tRNA-2-methylthio-N(6)-dimethylallyladenosine synthase (437 aa).

The region spanning 1-117 (MKFYIKTFGC…LPNLLEEAKS (117 aa)) is the MTTase N-terminal domain. Residues cysteine 10, cysteine 46, cysteine 80, cysteine 156, cysteine 160, and cysteine 163 each contribute to the [4Fe-4S] cluster site. A Radical SAM core domain is found at 142 to 371 (RENKYTAFVT…INLQKDITFK (230 aa)). The TRAM domain occupies 374–435 (LEYQDKIVEI…RFSLEGSIIG (62 aa)).

The protein belongs to the methylthiotransferase family. MiaB subfamily. As to quaternary structure, monomer. It depends on [4Fe-4S] cluster as a cofactor.

The protein resides in the cytoplasm. It catalyses the reaction N(6)-dimethylallyladenosine(37) in tRNA + (sulfur carrier)-SH + AH2 + 2 S-adenosyl-L-methionine = 2-methylsulfanyl-N(6)-dimethylallyladenosine(37) in tRNA + (sulfur carrier)-H + 5'-deoxyadenosine + L-methionine + A + S-adenosyl-L-homocysteine + 2 H(+). Catalyzes the methylthiolation of N6-(dimethylallyl)adenosine (i(6)A), leading to the formation of 2-methylthio-N6-(dimethylallyl)adenosine (ms(2)i(6)A) at position 37 in tRNAs that read codons beginning with uridine. The chain is tRNA-2-methylthio-N(6)-dimethylallyladenosine synthase from Sulfurihydrogenibium sp. (strain YO3AOP1).